Reading from the N-terminus, the 330-residue chain is tRNA U34 carboxymethyltransferase (330 aa).

Residues Lys91, Trp105, Lys110, Gly130, 152-154 (DPS), 181-182 (IE), Met196, Tyr200, and Arg315 each bind carboxy-S-adenosyl-L-methionine.

The protein belongs to the class I-like SAM-binding methyltransferase superfamily. CmoB family. In terms of assembly, homotetramer.

It catalyses the reaction carboxy-S-adenosyl-L-methionine + 5-hydroxyuridine(34) in tRNA = 5-carboxymethoxyuridine(34) in tRNA + S-adenosyl-L-homocysteine + H(+). In terms of biological role, catalyzes carboxymethyl transfer from carboxy-S-adenosyl-L-methionine (Cx-SAM) to 5-hydroxyuridine (ho5U) to form 5-carboxymethoxyuridine (cmo5U) at position 34 in tRNAs. In Shewanella sp. (strain ANA-3), this protein is tRNA U34 carboxymethyltransferase.